A 444-amino-acid polypeptide reads, in one-letter code: tRNA-2-methylthio-N(6)-dimethylallyladenosine synthase (444 aa).

Residues 8 to 122 (KTFYIETFGC…LAEMLVQIES (115 aa)) form the MTTase N-terminal domain. 6 residues coordinate [4Fe-4S] cluster: cysteine 17, cysteine 53, cysteine 85, cysteine 160, cysteine 164, and cysteine 167. Positions 146-376 (RGNAHRGYIT…MEHQREIQRA (231 aa)) constitute a Radical SAM core domain. The TRAM domain occupies 379-444 (RKHIGETIEV…PNSLVGELVG (66 aa)).

Belongs to the methylthiotransferase family. MiaB subfamily. As to quaternary structure, monomer. It depends on [4Fe-4S] cluster as a cofactor.

It localises to the cytoplasm. It carries out the reaction N(6)-dimethylallyladenosine(37) in tRNA + (sulfur carrier)-SH + AH2 + 2 S-adenosyl-L-methionine = 2-methylsulfanyl-N(6)-dimethylallyladenosine(37) in tRNA + (sulfur carrier)-H + 5'-deoxyadenosine + L-methionine + A + S-adenosyl-L-homocysteine + 2 H(+). In terms of biological role, catalyzes the methylthiolation of N6-(dimethylallyl)adenosine (i(6)A), leading to the formation of 2-methylthio-N6-(dimethylallyl)adenosine (ms(2)i(6)A) at position 37 in tRNAs that read codons beginning with uridine. The chain is tRNA-2-methylthio-N(6)-dimethylallyladenosine synthase from Koribacter versatilis (strain Ellin345).